The chain runs to 363 residues: D-alanine--D-alanine ligase (363 aa).

An ATP-grasp domain is found at 146 to 352 (KLCAADAGVA…FTALIDKLLH (207 aa)). 179-234 (DSTFGYPLFVKPASLGSSVGISKVHLPAALPEALKVACSYDRKILVEAAVSGKEIE) is an ATP binding site. 3 residues coordinate Mg(2+): Asp305, Glu319, and Asn321.

Belongs to the D-alanine--D-alanine ligase family. The cofactor is Mg(2+). Mn(2+) is required as a cofactor.

It is found in the cytoplasm. The enzyme catalyses 2 D-alanine + ATP = D-alanyl-D-alanine + ADP + phosphate + H(+). The protein operates within cell wall biogenesis; peptidoglycan biosynthesis. In terms of biological role, cell wall formation. The chain is D-alanine--D-alanine ligase from Chlorobium limicola (strain DSM 245 / NBRC 103803 / 6330).